The primary structure comprises 527 residues: UDP-glucuronosyltransferase 2A3 (527 aa).

The first 23 residues, 1–23, serve as a signal peptide directing secretion; sequence MRSEKSALVFLLLQLFCVGCGFC. Residues 24-486 lie on the Extracellular side of the membrane; the sequence is GKVLVWPCDM…AAHNLTWFQH (463 aa). N313 is a glycosylation site (N-linked (GlcNAc...) asparagine). The helical transmembrane segment at 487–507 threads the bilayer; sequence YSIDVIGFLLACVATAIFLFT. Topologically, residues 508 to 523 are cytoplasmic; sequence KCCLFSCQKFNKTRKI.

The protein belongs to the UDP-glycosyltransferase family.

Its subcellular location is the membrane. It catalyses the reaction glucuronate acceptor + UDP-alpha-D-glucuronate = acceptor beta-D-glucuronoside + UDP + H(+). Its function is as follows. UDP-glucuronosyltransferases catalyze phase II biotransformation reactions in which lipophilic substrates are conjugated with glucuronic acid to increase water solubility and enhance excretion. They are of major importance in the conjugation and subsequent elimination of potentially toxic xenobiotics and endogenous compounds. The sequence is that of UDP-glucuronosyltransferase 2A3 (UGT2A3) from Pongo abelii (Sumatran orangutan).